We begin with the raw amino-acid sequence, 143 residues long: MKNIVLASLLGFGLISSAWATETVNIHERVNNAQAPAHQMQSAAAPVGIQGTAPRMAGMDQHEQAIIAHETMTNGSADAHQKMVESHQRMMGSQTVSPTGPSKSLAAMNEHERAAVAHEFMNNGQSGPHQAMAEAHRRMLSAG.

Positions methionine 1–alanine 20 are cleaved as a signal peptide.

This sequence to E.coli PcoE.

The protein resides in the periplasm. Functionally, component of the sil cation-efflux system that confers resistance to silver. This chain is Silver-binding protein SilE (silE), found in Salmonella typhimurium.